The chain runs to 252 residues: Chitooligosaccharide deacetylase (252 aa).

Residues His61 and His125 each coordinate Mg(2+).

This sequence belongs to the YdjC deacetylase family. ChbG subfamily. Homodimer. It depends on Mg(2+) as a cofactor.

It localises to the cytoplasm. It carries out the reaction N,N'-diacetylchitobiose + H2O = N-acetyl-beta-D-glucosaminyl-(1-&gt;4)-D-glucosamine + acetate. The catalysed reaction is diacetylchitobiose-6'-phosphate + H2O = N'-monoacetylchitobiose-6'-phosphate + acetate. Its pathway is glycan degradation; chitin degradation. Its function is as follows. Involved in the degradation of chitin. ChbG is essential for growth on the acetylated chitooligosaccharides chitobiose and chitotriose but is dispensable for growth on cellobiose and chitosan dimer, the deacetylated form of chitobiose. Deacetylation of chitobiose-6-P and chitotriose-6-P is necessary for both the activation of the chb promoter by the regulatory protein ChbR and the hydrolysis of phosphorylated beta-glucosides by the phospho-beta-glucosidase ChbF. Catalyzes the removal of only one acetyl group from chitobiose-6-P to yield monoacetylchitobiose-6-P, the inducer of ChbR and the substrate of ChbF. This chain is Chitooligosaccharide deacetylase, found in Salmonella newport (strain SL254).